The chain runs to 209 residues: Prolactin (209 aa).

Positions 1-24 (MAQRFKGRSLFLTALLCLASQGYA) are cleaved as a signal peptide. Cystine bridges form between Cys70–Cys184 and Cys201–Cys209.

It belongs to the somatotropin/prolactin family.

It is found in the secreted. This is Prolactin (prl) from Anguilla anguilla (European freshwater eel).